Reading from the N-terminus, the 270-residue chain is UPF0162 protein PA3419 (270 aa).

Belongs to the UPF0162 family.

The polypeptide is UPF0162 protein PA3419 (Pseudomonas aeruginosa (strain ATCC 15692 / DSM 22644 / CIP 104116 / JCM 14847 / LMG 12228 / 1C / PRS 101 / PAO1)).